We begin with the raw amino-acid sequence, 129 residues long: M-zodatoxin-Lt8d (129 aa).

The N-terminal stretch at 1-20 (MKYFVVALALVAAFACIAES) is a signal peptide. A propeptide spanning residues 21 to 60 (KPAESEHELAEVEEENELADLEDAVWLEHLADLSDLEEAR) is cleaved from the precursor. The Processing quadruplet motif motif lies at 57 to 60 (EEAR).

Post-translationally, cleavage of the propeptide depends on the processing quadruplet motif (XXXR, with at least one of X being E). Expressed by the venom gland.

The protein localises to the secreted. Functionally, insecticidal, cytolytic and antimicrobial peptide. Forms voltage-dependent, ion-permeable channels in membranes. At high concentration causes cell membrane lysis. This Lachesana tarabaevi (Spider) protein is M-zodatoxin-Lt8d (cit 1-4).